The chain runs to 493 residues: (+)-menthofuran synthase (493 aa).

Residue M1 is a topological domain, cytoplasmic. The chain crosses the membrane as a helical; Signal-anchor for type II membrane protein span at residues 2–19; sequence AALLVFFSVSLILLAVLF. Residues 20–493 lie on the Lumenal side of the membrane; sequence HKRKSSLSSR…LLVLATPRQS (474 aa). N-linked (GlcNAc...) asparagine glycosylation occurs at N169. A heme-binding site is contributed by C434.

The protein belongs to the cytochrome P450 family. Heme serves as cofactor.

It is found in the membrane. It catalyses the reaction (R)-pulegone + reduced [NADPH--hemoprotein reductase] + O2 = (R)-menthofuran + oxidized [NADPH--hemoprotein reductase] + 2 H2O + H(+). It participates in secondary metabolite biosynthesis; terpenoid biosynthesis. Functionally, monoterpene synthase that catalyzes the formation of (+)-menthofuran from (+)-pulegone. The chain is (+)-menthofuran synthase from Mentha piperita (Peppermint).